The sequence spans 88 residues: UPF0297 protein YrzL (88 aa).

It belongs to the UPF0297 family.

In Bacillus subtilis (strain 168), this protein is UPF0297 protein YrzL (yrzL).